Consider the following 124-residue polypeptide: Non-specific lipid-transfer protein (124 aa).

The first 26 residues, 1–26, serve as a signal peptide directing secretion; the sequence is MANSGVMKLVCLVLACMVVAAPLAEA. Intrachain disulfides connect Cys-30/Cys-77, Cys-40/Cys-54, Cys-55/Cys-100, and Cys-75/Cys-114.

It belongs to the plant LTP family.

Functionally, plant non-specific lipid-transfer proteins transfer phospholipids as well as galactolipids across membranes. May play a role in wax or cutin deposition in the cell walls of expanding epidermal cells and certain secretory tissues. This chain is Non-specific lipid-transfer protein, found in Macadamia integrifolia (Macadamia nut).